Reading from the N-terminus, the 302-residue chain is Decaprenyl-phosphate phosphoribosyltransferase (302 aa).

Lys28 contacts 5-phospho-alpha-D-ribose 1-diphosphate. The next 2 helical transmembrane spans lie at 30-50 (VLVL…DYVE) and 55-75 (VSMA…VNDV). Tyr70 provides a ligand contact to 5-phospho-alpha-D-ribose 1-diphosphate. Positions 73 and 77 each coordinate Mg(2+). Lys87 serves as a coordination point for 5-phospho-alpha-D-ribose 1-diphosphate. 2 helical membrane passes run 100-120 (WLAY…AWML) and 122-142 (PNLA…CFGL). Residues Lys143 and Arg160 each contribute to the 5-phospho-alpha-D-ribose 1-diphosphate site. 2 helical membrane-spanning segments follow: residues 146–166 (AVVE…AGGV) and 170–190 (IPLS…MVAG). Residue Lys191 coordinates trans,octa-cis-decaprenyl phosphate. 3 helical membrane passes run 218 to 238 (LRFV…LWAF), 244 to 264 (SGSW…RYAV), and 282 to 302 (RVLQ…VAFG).

Belongs to the UbiA prenyltransferase family. DPPR synthase subfamily. Homotrimer. It depends on Mg(2+) as a cofactor.

Its subcellular location is the cell inner membrane. The catalysed reaction is trans,octa-cis-decaprenyl phosphate + 5-phospho-alpha-D-ribose 1-diphosphate + H(+) = trans,octa-cis-decaprenylphospho-beta-D-ribofuranose 5-phosphate + diphosphate. The protein operates within cell wall biogenesis; cell wall polysaccharide biosynthesis. In terms of biological role, involved in the biosynthesis of decaprenylphosphoryl arabinose (DPA) a precursor for arabinan synthesis in mycobacterial cell wall biosynthesis. Catalyzes the transfer of a 5-phosphoribosyl residue from phosphoribose diphosphate (PRPP) to decaprenyl phosphate (DP) to form decaprenylphosphoryl-5-phosphoribose (DPPR). The protein is Decaprenyl-phosphate phosphoribosyltransferase of Mycobacterium tuberculosis (strain CDC 1551 / Oshkosh).